Here is a 935-residue protein sequence, read N- to C-terminus: Potassium channel AKT1 (935 aa).

Residues 1–106 lie on the Cytoplasmic side of the membrane; it reads MARWGAARMA…YDRRYRIWET (106 aa). Residues 107-127 traverse the membrane as a helical segment; it reads FLIVLVVYSAWVSPFEFGFIP. Residues 128–136 lie on the Extracellular side of the membrane; that stretch reads KPTGALATA. Residues 137–157 traverse the membrane as a helical segment; it reads DNVVNAFFAVDIILTFFVAYL. The Cytoplasmic segment spans residues 158-178; that stretch reads DKMSYMLEDDPKKIAWRYSTT. Residues 179 to 199 traverse the membrane as a helical segment; that stretch reads WLVLDVASTIPSEFARRILPS. The Extracellular segment spans residues 200-205; the sequence is KLRSYG. A helical; Voltage-sensor membrane pass occupies residues 206–226; sequence FFNMLRLWRLRRVSSLFSRLE. Topologically, residues 227–240 are cytoplasmic; the sequence is KDRHFNYFWVRCAK. The chain crosses the membrane as a helical span at residues 241 to 261; it reads LICVTLFAVHCAACFYYLLAD. Over 262-288 the chain is Extracellular; that stretch reads RYPVPTSTWIGNYMADFHERSLWIRYV. Positions 289-308 form an intramembrane region, pore-forming; sequence TSVYWSITTLTTVGYGDLHA. Residues 309–312 lie on the Extracellular side of the membrane; it reads ENTR. A helical membrane pass occupies residues 313–333; it reads EMIFNIFYMLFNLGLTAYLIG. Topologically, residues 334 to 935 are cytoplasmic; it reads NMTNLVVHGT…WDAEKMKGKS (602 aa). Position 419–538 (419–538) interacts with a nucleoside 3',5'-cyclic phosphate; the sequence is LFQGVSNDLI…TIIMNNLIQF (120 aa). ANK repeat units follow at residues 565–594, 598–627, 631–660, 662–691, 695–724, and 728–757; these read DLPITLCFAVTRGDDFLLHQLLKRGMDPNE, DGHTALHIAASKGNEQCVRLLLEYGADPNA, EGKVPLWEALCEKHAAVVQLLVEGGADLSS, DTGLYACIAVEESDTELLNDIIHYGGDVNR, DGTTALHRAVCDGNVQMAELLLEHGADIDK, and NGWTPRALAEQQGHDDIQLLFRSRKAATAS. The interval 826-854 is disordered; it reads SQAQRETDHPLSRGGLAATGSPNPSSGSR. Residues 845-854 are compositionally biased toward polar residues; that stretch reads GSPNPSSGSR. In terms of domain architecture, KHA spans 859 to 935; it reads RVTISCPEKG…WDAEKMKGKS (77 aa).

It belongs to the potassium channel family. Plant (TC 1.A.1.4) subfamily. The potassium channel is probably a homo- or heterotetrameric complex of pore-forming subunits. In terms of tissue distribution, expressed in roots and coleoptile of young seedlings.

The protein resides in the membrane. Highly selective inward-rectifying potassium channel that mediates potassium uptake by plant roots. Assuming opened or closed conformations in response to the voltage difference across the membrane, the channel is activated by hyperpolarization. May be a major salt-sensitive potassium channel in roots. The chain is Potassium channel AKT1 (AKT1) from Oryza sativa subsp. japonica (Rice).